We begin with the raw amino-acid sequence, 140 residues long: Methylglyoxal synthase (140 aa).

Residues 1–140 (MKIALIAHDK…RGRKGEINGL (140 aa)) form the MGS-like domain. Substrate contacts are provided by residues histidine 8, lysine 12, 34–37 (TGTT), and 54–55 (SG). The active-site Proton donor/acceptor is the aspartate 60. Residue histidine 87 participates in substrate binding.

The protein belongs to the methylglyoxal synthase family.

It catalyses the reaction dihydroxyacetone phosphate = methylglyoxal + phosphate. Its function is as follows. Catalyzes the formation of methylglyoxal from dihydroxyacetone phosphate. The protein is Methylglyoxal synthase of Geobacillus sp. (strain WCH70).